A 317-amino-acid chain; its full sequence is L-lactate dehydrogenase (317 aa).

NAD(+) is bound by residues valine 17, aspartate 38, lysine 43, tyrosine 68, and glycine 82–valine 83. Position 91 (arginine 91) interacts with substrate. NAD(+)-binding positions include serine 104, valine 121–asparagine 123, and serine 146. Asparagine 123–aspartate 126 is a binding site for substrate. Aspartate 151 to arginine 154 is a binding site for substrate. Beta-D-fructose 1,6-bisphosphate-binding residues include lysine 156 and histidine 171. Histidine 178 functions as the Proton acceptor in the catalytic mechanism. Tyrosine 224 carries the post-translational modification Phosphotyrosine. Threonine 233 contacts substrate.

Belongs to the LDH/MDH superfamily. LDH family. Homotetramer.

The protein localises to the cytoplasm. The catalysed reaction is (S)-lactate + NAD(+) = pyruvate + NADH + H(+). It participates in fermentation; pyruvate fermentation to lactate; (S)-lactate from pyruvate: step 1/1. Allosterically activated by fructose 1,6-bisphosphate (FBP). Catalyzes the conversion of lactate to pyruvate. This is L-lactate dehydrogenase from Clostridium perfringens (strain ATCC 13124 / DSM 756 / JCM 1290 / NCIMB 6125 / NCTC 8237 / Type A).